Reading from the N-terminus, the 453-residue chain is Pup--protein ligase (453 aa).

Glu9 serves as a coordination point for Mg(2+). Residue Arg53 participates in ATP binding. Tyr55 is a binding site for Mg(2+). Asp57 functions as the Proton acceptor in the catalytic mechanism. Residue Glu63 participates in Mg(2+) binding. ATP is bound by residues Thr66 and Trp420.

Belongs to the Pup ligase/Pup deamidase family. Pup-conjugating enzyme subfamily.

It catalyses the reaction ATP + [prokaryotic ubiquitin-like protein]-L-glutamate + [protein]-L-lysine = ADP + phosphate + N(6)-([prokaryotic ubiquitin-like protein]-gamma-L-glutamyl)-[protein]-L-lysine.. Its pathway is protein degradation; proteasomal Pup-dependent pathway. It functions in the pathway protein modification; protein pupylation. Its function is as follows. Catalyzes the covalent attachment of the prokaryotic ubiquitin-like protein modifier Pup to the proteasomal substrate proteins, thereby targeting them for proteasomal degradation. This tagging system is termed pupylation. The ligation reaction involves the side-chain carboxylate of the C-terminal glutamate of Pup and the side-chain amino group of a substrate lysine. This is Pup--protein ligase from Streptomyces griseus subsp. griseus (strain JCM 4626 / CBS 651.72 / NBRC 13350 / KCC S-0626 / ISP 5235).